The primary structure comprises 326 residues: Putative ABC transporter ATP-binding protein MA_4020 (326 aa).

The segment covering 1 to 12 (MTISTLSSSYGN) has biased composition (polar residues). Residues 1–34 (MTISTLSSSYGNAQDVPAEDSDRHGSIEPGSEKA) form a disordered region. The ABC transporter domain occupies 46–281 (LEVKNLCHRY…PELLRKAHLR (236 aa)). Residue 80–87 (GANGAGKS) coordinates ATP.

Belongs to the ABC transporter superfamily.

The protein resides in the cell membrane. Probably part of an ABC transporter complex. Responsible for energy coupling to the transport system. This is Putative ABC transporter ATP-binding protein MA_4020 from Methanosarcina acetivorans (strain ATCC 35395 / DSM 2834 / JCM 12185 / C2A).